The following is a 484-amino-acid chain: tRNA-2-methylthio-N(6)-dimethylallyladenosine synthase (484 aa).

Positions 36 to 153 constitute an MTTase N-terminal domain; that stretch reads GKLYIKTHGC…LPELIRARRE (118 aa). The [4Fe-4S] cluster site is built by Cys-45, Cys-82, Cys-116, Cys-190, Cys-194, and Cys-197. One can recognise a Radical SAM core domain in the interval 176–415; the sequence is RAEGPSAFVS…HINAHAASIS (240 aa). Residues 416 to 479 form the TRAM domain; sequence QSMVGSVQRV…SNSLRGRIQL (64 aa). Residues 428–450 are disordered; it reads EGPSRRDPNELTGKSENMRPVNF.

This sequence belongs to the methylthiotransferase family. MiaB subfamily. Monomer. The cofactor is [4Fe-4S] cluster.

The protein localises to the cytoplasm. It carries out the reaction N(6)-dimethylallyladenosine(37) in tRNA + (sulfur carrier)-SH + AH2 + 2 S-adenosyl-L-methionine = 2-methylsulfanyl-N(6)-dimethylallyladenosine(37) in tRNA + (sulfur carrier)-H + 5'-deoxyadenosine + L-methionine + A + S-adenosyl-L-homocysteine + 2 H(+). Functionally, catalyzes the methylthiolation of N6-(dimethylallyl)adenosine (i(6)A), leading to the formation of 2-methylthio-N6-(dimethylallyl)adenosine (ms(2)i(6)A) at position 37 in tRNAs that read codons beginning with uridine. In Xanthomonas axonopodis pv. citri (strain 306), this protein is tRNA-2-methylthio-N(6)-dimethylallyladenosine synthase.